An 869-amino-acid chain; its full sequence is Structure-specific endonuclease subunit SLX4 (869 aa).

Positions 40–59 (SPLSLPSPTSLLDFLSTSTS) are enriched in low complexity. Disordered stretches follow at residues 40 to 79 (SPLS…EVLD), 92 to 116 (NRVV…ESPG), 165 to 199 (KANQ…INDL), 293 to 323 (GLSD…NPPK), 351 to 388 (TLLS…KKNE), 418 to 437 (ANGH…HISN), and 630 to 774 (KTSN…ASET). Basic and acidic residues predominate over residues 63-79 (ARSDTDGDKTQGKEVLD). Composition is skewed to polar residues over residues 165–174 (KANQTVSLQP) and 294–311 (LSDS…SATS). A compositionally biased stretch (basic residues) spans 312–322 (KPRRVKAKNPP). Composition is skewed to polar residues over residues 647 to 657 (VDESTQGQSLG) and 664 to 673 (SIPQTATTQV). Residues 688-700 (VPVPSRRSTSTSK) show a composition bias toward low complexity. Polar residues predominate over residues 765–774 (IPSTGTASET).

This sequence belongs to the SLX4 family. Forms a heterodimer with SLX1. Post-translationally, phosphorylated in response to DNA damage.

Its subcellular location is the nucleus. Its function is as follows. Regulatory subunit of the SLX1-SLX4 structure-specific endonuclease that resolves DNA secondary structures generated during DNA repair and recombination. Has endonuclease activity towards branched DNA substrates, introducing single-strand cuts in duplex DNA close to junctions with ss-DNA. This Paracoccidioides brasiliensis (strain Pb18) protein is Structure-specific endonuclease subunit SLX4.